Reading from the N-terminus, the 96-residue chain is Uteroglobin (96 aa).

The N-terminal stretch at 1–19 is a signal peptide; the sequence is MKIAITITVLMLSICCSSA.

The protein belongs to the secretoglobin family. Antiparallel homodimer; disulfide-linked. Interaction with LMBR1L is controversial. As to expression, club cells (nonciliated cells of the surface epithelium of the pulmonary airways).

The protein localises to the secreted. Functionally, binds phosphatidylcholine, phosphatidylinositol, polychlorinated biphenyls (PCB) and weakly progesterone, potent inhibitor of phospholipase A2. In Rattus norvegicus (Rat), this protein is Uteroglobin (Scgb1a1).